A 419-amino-acid polypeptide reads, in one-letter code: Effector protein BipC (419 aa).

Disordered regions lie at residues 62-94 (VAGS…GLER) and 338-402 (LQSG…AKSQ). Basic and acidic residues-rich tracts occupy residues 71–94 (ELAR…GLER) and 380–392 (TRDE…REAA).

The protein belongs to the SctB/SipC family.

The protein resides in the secreted. The chain is Effector protein BipC (bipC) from Burkholderia pseudomallei (strain 1710b).